Consider the following 349-residue polypeptide: Hydroxymethylglutaryl-CoA synthase (349 aa).

The (3S)-3-hydroxy-3-methylglutaryl-CoA site is built by Asp-29 and Ala-30. The active-site Proton donor/acceptor is Glu-81. (3S)-3-hydroxy-3-methylglutaryl-CoA-binding residues include Cys-113 and Thr-154. Cys-113 serves as the catalytic Acyl-thioester intermediate. Arg-202 lines the CoA pocket. The (3S)-3-hydroxy-3-methylglutaryl-CoA site is built by Thr-204 and His-237. Catalysis depends on His-237, which acts as the Proton donor/acceptor. Lys-242 contributes to the CoA binding site. The (3S)-3-hydroxy-3-methylglutaryl-CoA site is built by Lys-246, Asn-269, and Ser-299.

The protein belongs to the thiolase-like superfamily. Archaeal HMG-CoA synthase family. In terms of assembly, interacts with acetoacetyl-CoA thiolase that catalyzes the precedent step in the pathway and with a DUF35 protein. The acetoacetyl-CoA thiolase/HMG-CoA synthase complex channels the intermediate via a fused CoA-binding site, which allows for efficient coupling of the endergonic thiolase reaction with the exergonic HMGCS reaction.

It catalyses the reaction acetoacetyl-CoA + acetyl-CoA + H2O = (3S)-3-hydroxy-3-methylglutaryl-CoA + CoA + H(+). Its pathway is metabolic intermediate biosynthesis; (R)-mevalonate biosynthesis; (R)-mevalonate from acetyl-CoA: step 2/3. In terms of biological role, catalyzes the condensation of acetyl-CoA with acetoacetyl-CoA to form 3-hydroxy-3-methylglutaryl-CoA (HMG-CoA). Functions in the mevalonate (MVA) pathway leading to isopentenyl diphosphate (IPP), a key precursor for the biosynthesis of isoprenoid compounds that are building blocks of archaeal membrane lipids. The protein is Hydroxymethylglutaryl-CoA synthase of Methanosarcina mazei (strain ATCC BAA-159 / DSM 3647 / Goe1 / Go1 / JCM 11833 / OCM 88) (Methanosarcina frisia).